A 1755-amino-acid chain; its full sequence is Transposon Ty1-ER1 Gag-Pol polyprotein (1755 aa).

Composition is skewed to polar residues over residues 1 to 23 (MESQ…SVTS), 48 to 60 (TKAN…TPAS), and 127 to 152 (QSQF…GNTF). Disordered stretches follow at residues 1 to 93 (MESQ…MMTQ), 126 to 174 (PQSQ…PPPM), and 352 to 421 (GSRN…SKST). The segment covering 153–165 (TDSSSADSDMTST) has biased composition (low complexity). Residues 299 to 401 (NNGIHINNKV…NSKSKTARAH (103 aa)) form an RNA-binding region. Residues 402–418 (NVSTSNNSPSTDNDSIS) show a composition bias toward low complexity. Ser416 is subject to Phosphoserine. The active-site For protease activity; shared with dimeric partner is the Asp461. The interval 583-640 (NVHTSESTRKYPYPFIHRMLAHANAQTIRYSLKNNTITYFNESDVDWSSAIDYQCPDC) is integrase-type zinc finger-like. Positions 660–835 (NSYEPFQYLH…AGLDISTLLP (176 aa)) constitute an Integrase catalytic domain. Asp671 and Asp736 together coordinate Mg(2+). 3 disordered regions span residues 956-1087 (SKAV…ETEK), 1092-1111 (RSPS…NIVP), and 1130-1171 (DLPL…DSNA). Low complexity predominate over residues 960–969 (SPTDSTPPST). Residues 1005–1015 (STPQISNIEST) show a composition bias toward polar residues. Positions 1038-1053 (ESSHASKSKDFRHSDS) are enriched in basic and acidic residues. Composition is skewed to polar residues over residues 1054 to 1082 (YSEN…QISD) and 1101 to 1111 (PENNSSHNIVP). The Bipartite nuclear localization signal signature appears at 1178–1212 (KKRSLEDNETEIKVSRDTWNTKNMRSLEPPRSKKR). One can recognise a Reverse transcriptase Ty1/copia-type domain in the interval 1338–1476 (NNYYITQLDI…DILGLEIKYQ (139 aa)). Mg(2+) is bound by residues Asp1346, Asp1427, Asp1428, Asp1610, Glu1652, and Asp1685. An RNase H Ty1/copia-type domain is found at 1610 to 1752 (DASYGNQPYY…IKTFKLLTNK (143 aa)).

The capsid protein forms a homotrimer, from which the VLPs are assembled. The protease is a homodimer, whose active site consists of two apposed aspartic acid residues. Post-translationally, initially, virus-like particles (VLPs) are composed of the structural unprocessed proteins Gag and Gag-Pol, and also contain the host initiator methionine tRNA (tRNA(i)-Met) which serves as a primer for minus-strand DNA synthesis, and a dimer of genomic Ty RNA. Processing of the polyproteins occurs within the particle and proceeds by an ordered pathway, called maturation. First, the protease (PR) is released by autocatalytic cleavage of the Gag-Pol polyprotein yielding capsid protein p45 and a Pol-p154 precursor protein. This cleavage is a prerequisite for subsequent processing of Pol-p154 at the remaining sites to release the mature structural and catalytic proteins. Maturation takes place prior to the RT reaction and is required to produce transposition-competent VLPs.

The protein resides in the cytoplasm. The protein localises to the nucleus. It catalyses the reaction DNA(n) + a 2'-deoxyribonucleoside 5'-triphosphate = DNA(n+1) + diphosphate. The catalysed reaction is Endonucleolytic cleavage to 5'-phosphomonoester.. In terms of biological role, capsid protein (CA) is the structural component of the virus-like particle (VLP), forming the shell that encapsulates the retrotransposons dimeric RNA genome. The particles are assembled from trimer-clustered units and there are holes in the capsid shells that allow for the diffusion of macromolecules. CA also has nucleocapsid-like chaperone activity, promoting primer tRNA(i)-Met annealing to the multipartite primer-binding site (PBS), dimerization of Ty1 RNA and initiation of reverse transcription. The aspartyl protease (PR) mediates the proteolytic cleavages of the Gag and Gag-Pol polyproteins after assembly of the VLP. Its function is as follows. Reverse transcriptase/ribonuclease H (RT) is a multifunctional enzyme that catalyzes the conversion of the retro-elements RNA genome into dsDNA within the VLP. The enzyme displays a DNA polymerase activity that can copy either DNA or RNA templates, and a ribonuclease H (RNase H) activity that cleaves the RNA strand of RNA-DNA heteroduplexes during plus-strand synthesis and hydrolyzes RNA primers. The conversion leads to a linear dsDNA copy of the retrotransposon that includes long terminal repeats (LTRs) at both ends. Functionally, integrase (IN) targets the VLP to the nucleus, where a subparticle preintegration complex (PIC) containing at least integrase and the newly synthesized dsDNA copy of the retrotransposon must transit the nuclear membrane. Once in the nucleus, integrase performs the integration of the dsDNA into the host genome. In Saccharomyces cerevisiae (strain ATCC 204508 / S288c) (Baker's yeast), this protein is Transposon Ty1-ER1 Gag-Pol polyprotein (TY1B-ER1).